The primary structure comprises 1322 residues: Serine/threonine-protein phosphatase UIS2 (1322 aa).

The first 22 residues, 1–22 (MNISKFFLIFIPLVLFKYPANN), serve as a signal peptide directing secretion. Residues 1–535 (MNISKFFLIF…NELKSTSNAM (535 aa)) form an interaction with phosphorylated eIF2alpha region. 2 stretches are compositionally biased toward basic and acidic residues: residues 267–279 (EKSA…KELN) and 288–326 (NSKK…KSEN). 4 disordered regions span residues 267–326 (EKSA…KSEN), 613–646 (NTNT…SENN), 1066–1087 (NETP…IQPN), and 1170–1196 (EVPD…NKDD). The span at 631 to 646 (NNYTDGNEGNNNSENN) shows a compositional bias: low complexity.

It depends on Mn(2+) as a cofactor.

The catalysed reaction is O-phospho-L-seryl-[protein] + H2O = L-seryl-[protein] + phosphate. In terms of biological role, protein phosphatase which dephosphorylates 'Ser-59' of translation factor eIF2alpha during the liver stage, thus enabling protein translation. The protein is Serine/threonine-protein phosphatase UIS2 of Plasmodium berghei (strain Anka).